A 120-amino-acid chain; its full sequence is uncharacterized protein (120 aa).

The next 3 membrane-spanning stretches (helical) occupy residues 24 to 44, 61 to 81, and 86 to 106; these read ALLG…ALCY, IGVV…NLAV, and PLGK…GIVV.

This sequence to M.leprae ML1176.

Its subcellular location is the cell membrane. This is an uncharacterized protein from Mycobacterium bovis (strain ATCC BAA-935 / AF2122/97).